A 327-amino-acid polypeptide reads, in one-letter code: Phenylalanine--tRNA ligase alpha subunit (327 aa).

Glutamate 252 is a binding site for Mg(2+).

It belongs to the class-II aminoacyl-tRNA synthetase family. Phe-tRNA synthetase alpha subunit type 1 subfamily. In terms of assembly, tetramer of two alpha and two beta subunits. It depends on Mg(2+) as a cofactor.

It localises to the cytoplasm. It catalyses the reaction tRNA(Phe) + L-phenylalanine + ATP = L-phenylalanyl-tRNA(Phe) + AMP + diphosphate + H(+). This chain is Phenylalanine--tRNA ligase alpha subunit, found in Klebsiella pneumoniae (strain 342).